The following is a 142-amino-acid chain: Chorion class A protein Ld12 (142 aa).

The first 18 residues, 1–18 (MNSFALLLVCIQACLVQS), serve as a signal peptide directing secretion.

It belongs to the chorion protein family.

This protein is one of many from the eggshell of the gypsy moth. This Lymantria dispar (Gypsy moth) protein is Chorion class A protein Ld12.